The following is a 263-amino-acid chain: Chymotrypsinogen 2 (263 aa).

The signal sequence occupies residues 1–18; that stretch reads MAFLWLLSCFALLGTAFG. 5 cysteine pairs are disulfide-bonded: Cys-19–Cys-140, Cys-60–Cys-76, Cys-154–Cys-219, Cys-186–Cys-200, and Cys-209–Cys-238. The region spanning 34–261 is the Peptidase S1 domain; sequence IVNGEDAVPG…LIPWVQQILQ (228 aa). The active-site Charge relay system is His-75. Residue Ser-93 is modified to Phosphoserine. The active-site Charge relay system is Asp-120. Ser-213 acts as the Charge relay system in catalysis.

It belongs to the peptidase S1 family.

The protein localises to the secreted. It localises to the extracellular space. The enzyme catalyses Preferential cleavage: Tyr-|-Xaa, Trp-|-Xaa, Phe-|-Xaa, Leu-|-Xaa.. The sequence is that of Chymotrypsinogen 2 (CTRB1) from Canis lupus familiaris (Dog).